The sequence spans 509 residues: Histidine--tRNA ligase, cytoplasmic (509 aa).

A2 carries the N-acetylalanine modification. The WHEP-TRS domain occupies 3–59; sequence DRAALEDLVRVQGERVRGLKQQKASAEQIEEEVAKLLKLKAQLGPDEGKPKFVLKTP. S66 carries the phosphoserine modification. Residues 130-132, R157, Q173, D177, R326, and 330-331 each bind L-histidine; these read DLT and YY. A Phosphoserine modification is found at S356.

This sequence belongs to the class-II aminoacyl-tRNA synthetase family. Homodimer.

It is found in the cytoplasm. The enzyme catalyses tRNA(His) + L-histidine + ATP = L-histidyl-tRNA(His) + AMP + diphosphate + H(+). Functionally, catalyzes the ATP-dependent ligation of histidine to the 3'-end of its cognate tRNA, via the formation of an aminoacyl-adenylate intermediate (His-AMP). Plays a role in axon guidance. The sequence is that of Histidine--tRNA ligase, cytoplasmic (HARS1) from Bos taurus (Bovine).